The primary structure comprises 552 residues: Steroid transmembrane transporter SLC22A24 (552 aa).

12 helical membrane-spanning segments follow: residues 16–36 (FQIC…PNIV), 146–166 (SMVQ…YGHL), 178–200 (LCFL…LVYC), 204–226 (FLAG…EWTL), 234–254 (IMVL…LAFA), 260–280 (ILQL…WKMV), 350–370 (VFGL…LILN), 380–400 (LFQI…LLTL), 407–427 (ISQI…TFLP), 435–455 (VVLA…ASVH), 474–492 (VSGR…LMAY), and 496–516 (LPWI…LLLP).

Belongs to the major facilitator (TC 2.A.1) superfamily. Organic cation transporter (TC 2.A.1.19) family. As to expression, localized to the kidney. Highly specific expression pattern in the nephron, localized to segment 3 of the proximal tubule.

The protein resides in the cell membrane. It carries out the reaction estrone 3-sulfate(out) + glutarate(in) = estrone 3-sulfate(in) + glutarate(out). It catalyses the reaction 17beta-estradiol 17-O-(beta-D-glucuronate)(out) + glutarate(in) = 17beta-estradiol 17-O-(beta-D-glucuronate)(in) + glutarate(out). The catalysed reaction is taurocholate(out) + glutarate(in) = taurocholate(in) + glutarate(out). The enzyme catalyses 5alpha-androstane-3alpha,17beta-diol 3-O-(beta-D-glucuronate)(out) + glutarate(in) = 5alpha-androstane-3alpha,17beta-diol 3-O-(beta-D-glucuronate)(in) + glutarate(out). It carries out the reaction glycocholate(out) + glutarate(in) = glycocholate(in) + glutarate(out). It catalyses the reaction dehydroepiandrosterone 3-sulfate(out) + glutarate(in) = dehydroepiandrosterone 3-sulfate(in) + glutarate(out). The catalysed reaction is glutarate(in) + succinate(out) = glutarate(out) + succinate(in). Its activity is regulated as follows. Transport is chloride sensitive and transtimulated by glutaric acid. Transport is inhibited by anionic compounds from different chemical classes. In terms of biological role, renal transmembrane organic anion/dicarboxylate exchanger that participates in the reabsorption of conjugated steroids including estradiol-17beta-D-glucuronide (or 17beta-estradiol 17-O-(beta-D-glucuronate)), androstanediol glucuronide (or 5alpha-androstane-3alpha,17beta-diol 3-O-(beta-D-glucuronate)), and estrone 3-sulfate, as well as bile acids taurocholate and glycocholate, driven by an outward gradient of dicarboxylates such as glutarate or succinate. Functionally, similar uptake function as Isoform 1. Its function is as follows. Lack of transporter activity. The chain is Steroid transmembrane transporter SLC22A24 from Homo sapiens (Human).